A 306-amino-acid chain; its full sequence is D-alanine--D-alanine ligase (306 aa).

One can recognise an ATP-grasp domain in the interval 100–295 (KQIFRRAGLP…FGQLLERLME (196 aa)). ATP is bound at residue 127 to 180 (RLPYPLFVKSNTGGSSLRLGRARNRAELDDIMGQIFAAGEEVIMEPVLPGREVT). 3 residues coordinate Mg(2+): Asp249, Glu262, and Asn264.

It belongs to the D-alanine--D-alanine ligase family. Mg(2+) serves as cofactor. It depends on Mn(2+) as a cofactor.

Its subcellular location is the cytoplasm. The catalysed reaction is 2 D-alanine + ATP = D-alanyl-D-alanine + ADP + phosphate + H(+). The protein operates within cell wall biogenesis; peptidoglycan biosynthesis. Cell wall formation. In Desulfovibrio desulfuricans (strain ATCC 27774 / DSM 6949 / MB), this protein is D-alanine--D-alanine ligase.